A 25-amino-acid chain; its full sequence is Dermaseptin-DI5 (25 aa).

It belongs to the frog skin active peptide (FSAP) family. Dermaseptin subfamily. As to expression, expressed by the skin glands.

Its subcellular location is the secreted. Functionally, antibacterial peptide with activity against Gram-positive bacteria S.aureus and E.faecalis, and Gram-negative bacteria P.aeruginosa and E.coli. The polypeptide is Dermaseptin-DI5 (Phyllomedusa distincta (Monkey frog)).